Reading from the N-terminus, the 509-residue chain is tRNA-2-methylthio-N(6)-dimethylallyladenosine synthase (509 aa).

The interval 1–21 is disordered; the sequence is MNEKQRIESGQVNPSDKKSEK. In terms of domain architecture, MTTase N-terminal spans 66–184; sequence RKFYIRTYGC…LPELLSEAYL (119 aa). Residues Cys75, Cys111, Cys145, Cys221, Cys225, and Cys228 each contribute to the [4Fe-4S] cluster site. The Radical SAM core domain occupies 207 to 437; sequence RTGKIKGWVN…NEVVNEISAK (231 aa). The TRAM domain occupies 440–503; the sequence is KEYEGQVVEV…TWSLDGEMVG (64 aa).

Belongs to the methylthiotransferase family. MiaB subfamily. As to quaternary structure, monomer. Requires [4Fe-4S] cluster as cofactor.

It is found in the cytoplasm. The enzyme catalyses N(6)-dimethylallyladenosine(37) in tRNA + (sulfur carrier)-SH + AH2 + 2 S-adenosyl-L-methionine = 2-methylsulfanyl-N(6)-dimethylallyladenosine(37) in tRNA + (sulfur carrier)-H + 5'-deoxyadenosine + L-methionine + A + S-adenosyl-L-homocysteine + 2 H(+). Catalyzes the methylthiolation of N6-(dimethylallyl)adenosine (i(6)A), leading to the formation of 2-methylthio-N6-(dimethylallyl)adenosine (ms(2)i(6)A) at position 37 in tRNAs that read codons beginning with uridine. The polypeptide is tRNA-2-methylthio-N(6)-dimethylallyladenosine synthase (Bacillus licheniformis (strain ATCC 14580 / DSM 13 / JCM 2505 / CCUG 7422 / NBRC 12200 / NCIMB 9375 / NCTC 10341 / NRRL NRS-1264 / Gibson 46)).